The following is a 463-amino-acid chain: Adenosylhomocysteinase (463 aa).

T54, D128, and E189 together coordinate substrate. 190-192 serves as a coordination point for NAD(+); sequence TTT. Substrate is bound by residues K219 and D223. Residues N224, 253 to 258, E276, N311, 332 to 334, and N377 contribute to the NAD(+) site; these read GYGDVG and IGH.

This sequence belongs to the adenosylhomocysteinase family. NAD(+) serves as cofactor.

The protein localises to the cytoplasm. It catalyses the reaction S-adenosyl-L-homocysteine + H2O = L-homocysteine + adenosine. It functions in the pathway amino-acid biosynthesis; L-homocysteine biosynthesis; L-homocysteine from S-adenosyl-L-homocysteine: step 1/1. May play a key role in the regulation of the intracellular concentration of adenosylhomocysteine. This chain is Adenosylhomocysteinase, found in Cereibacter sphaeroides (Rhodobacter sphaeroides).